We begin with the raw amino-acid sequence, 76 residues long: Exodeoxyribonuclease 7 small subunit (76 aa).

This sequence belongs to the XseB family. As to quaternary structure, heterooligomer composed of large and small subunits.

The protein resides in the cytoplasm. The catalysed reaction is Exonucleolytic cleavage in either 5'- to 3'- or 3'- to 5'-direction to yield nucleoside 5'-phosphates.. In terms of biological role, bidirectionally degrades single-stranded DNA into large acid-insoluble oligonucleotides, which are then degraded further into small acid-soluble oligonucleotides. The chain is Exodeoxyribonuclease 7 small subunit from Bacillus cereus (strain ATCC 14579 / DSM 31 / CCUG 7414 / JCM 2152 / NBRC 15305 / NCIMB 9373 / NCTC 2599 / NRRL B-3711).